We begin with the raw amino-acid sequence, 408 residues long: uncharacterized protein (408 aa).

Helical transmembrane passes span 9–29 (WFVL…RNSF), 49–69 (VSVS…GFFI), 77–97 (IMAL…YSPN), 100–120 (VFSA…VGVT), 135–155 (LALA…SPIW), 167–187 (TYTI…VFGM), 216–236 (LIHI…IIDA), 252–272 (GMMA…GWLS), 283–303 (SILF…ILGI), 308–328 (LWYF…IPLT), 340–360 (LIGS…ALSV), and 373–393 (YLLI…IELV).

This sequence belongs to the major facilitator superfamily.

It is found in the cell membrane. This is an uncharacterized protein from Bacillus subtilis (strain 168).